The sequence spans 235 residues: Ribonuclease 3 (235 aa).

An RNase III domain is found at 6–131; the sequence is IDQLERLTEH…LIAVMYLDGG (126 aa). Glutamate 44 is a Mg(2+) binding site. Residue aspartate 48 is part of the active site. Positions 117 and 120 each coordinate Mg(2+). Glutamate 120 is an active-site residue. The DRBM domain occupies 156–225; sequence DAKTELQEWA…AEKVLRREGI (70 aa).

It belongs to the ribonuclease III family. Homodimer. Requires Mg(2+) as cofactor.

Its subcellular location is the cytoplasm. The catalysed reaction is Endonucleolytic cleavage to 5'-phosphomonoester.. Its function is as follows. Digests double-stranded RNA. Involved in the processing of primary rRNA transcript to yield the immediate precursors to the large and small rRNAs (23S and 16S). Processes some mRNAs, and tRNAs when they are encoded in the rRNA operon. Processes pre-crRNA and tracrRNA of type II CRISPR loci if present in the organism. The sequence is that of Ribonuclease 3 from Bartonella quintana (strain Toulouse) (Rochalimaea quintana).